A 98-amino-acid chain; its full sequence is NADH-ubiquinone oxidoreductase chain 4L (98 aa).

The next 3 helical transmembrane spans lie at 1–21, 26–46, and 59–79; these read MASI…GVLI, LMST…MMTL, and APLI…ALLV.

This sequence belongs to the complex I subunit 4L family. In terms of assembly, core subunit of respiratory chain NADH dehydrogenase (Complex I) which is composed of 45 different subunits.

The protein resides in the mitochondrion inner membrane. It catalyses the reaction a ubiquinone + NADH + 5 H(+)(in) = a ubiquinol + NAD(+) + 4 H(+)(out). Core subunit of the mitochondrial membrane respiratory chain NADH dehydrogenase (Complex I) which catalyzes electron transfer from NADH through the respiratory chain, using ubiquinone as an electron acceptor. Part of the enzyme membrane arm which is embedded in the lipid bilayer and involved in proton translocation. The protein is NADH-ubiquinone oxidoreductase chain 4L (MT-ND4L) of Caenolestes fuliginosus (Shrew opossum).